Reading from the N-terminus, the 790-residue chain is Protein SEY1 (790 aa).

The Cytoplasmic portion of the chain corresponds to 1–692; the sequence is MELSEGELSH…KRSIVQHITQ (692 aa). Positions 55 to 284 constitute a GB1/RHD3-type G domain; the sequence is GNNYHIISVF…VSNELFKPEY (230 aa). 65 to 72 provides a ligand contact to GTP; sequence GSQSTGKS. Residues 693 to 713 traverse the membrane as a helical segment; the sequence is IPYYIYLIILVLGWNEFMAII. Over 714–716 the chain is Lumenal; that stretch reads RNP. Residues 717–737 form a helical membrane-spanning segment; sequence LFFSLSIVLGATVYVLYYLGL. Residues 738-790 are Cytoplasmic-facing; that stretch reads LRPALVVAQRTMDEVIVMAKTKLREVLIDDHEVTGRQLNKMAGSKENIELDDM.

It belongs to the TRAFAC class dynamin-like GTPase superfamily. GB1/RHD3 GTPase family. RHD3 subfamily.

The protein resides in the endoplasmic reticulum membrane. In terms of biological role, cooperates with the reticulon proteins and tubule-shaping DP1 family proteins to generate and maintain the structure of the tubular endoplasmic reticulum network. Has GTPase activity, which is required for its function in ER organization. Required for virulence and resistance to cycloheximide. The protein is Protein SEY1 of Candida albicans (strain SC5314 / ATCC MYA-2876) (Yeast).